The chain runs to 520 residues: MRVRKRQSRRTSTKLKEGIKKKASAHRKKEKKMAKKDVTWRSRSKKDPGIPSNFPYKAKILEEIEAKKMKDLEERELAKQQRLEARKAAKEQGVDAMDEDMIEDDENGLAALVESAQQAAAEYEGTPSNDADVRDDELDVIDYNIDFYGEDVEGESELEKSRKAYDKIFKSVIDASDVILYVLDARDPESTRSRKVEEAVLQSQGKRLILILNKVDLIPPHVLEQWLNYLKSSFPTIPLRASSGAVNGTSFNRKLSQTTTASALLESLKTYSNNSNLKRSIVVGVIGYPNVGKSSVINALLARRGGQSKACPVGNEAGVTTSLREIKIDNKLKILDSPGICFPSENKKRSKVEHEAELALLNALPAKHIVDPYPAVLMLVKRLAKSDEMTESFKKLYEIPPIPANDADTFTKHFLIHVARKRGRLGKGGIPNLASAGLSVLNDWRDGKILGWVLPNTSAAASQQDKQNLSTINTGTKQAPIAANESTIVSEWSKEFDLDGLFSSLDKAIDASKDQDTMME.

Composition is skewed to basic residues over residues 1–13 (MRVRKRQSRRTST) and 21–34 (KKASAHRKKEKKMA). Positions 1 to 53 (MRVRKRQSRRTSTKLKEGIKKKASAHRKKEKKMAKKDVTWRSRSKKDPGIPSN) are disordered. Over residues 35–48 (KKDVTWRSRSKKDP) the composition is skewed to basic and acidic residues. The CP-type G domain occupies 165–343 (YDKIFKSVID…ILDSPGICFP (179 aa)). GTP is bound by residues 213–216 (NKVD), 287–294 (GYPNVGKS), and 336–339 (DSPG). A Phosphoserine modification is found at Ser337.

It belongs to the TRAFAC class YlqF/YawG GTPase family.

The protein resides in the nucleus. Its function is as follows. GTPase required for 60S ribosomal subunit export to the cytoplasm. The polypeptide is Nuclear GTP-binding protein NUG1 (NUG1) (Saccharomyces cerevisiae (strain ATCC 204508 / S288c) (Baker's yeast)).